The chain runs to 147 residues: LDHNNLTRMPGPLPRSLRELHLDHNQISRVPNNALEGLENLTALYLQHNEIQEVGSSMRGLRSLILLDLSYNHLRRVPDGLPSALEQLYLEHNNVYTVPDSYFRGSPKLLYVRLSHNSLTNSGLASNTFNSSSLLELDLSYNQLQKI.

LRR repeat units lie at residues 1–15 (LDHN…PLPR), 16–37 (SLRE…ALEG), 40–61 (NLTA…MRGL), 63–84 (SLIL…LPSA), 85–105 (LEQL…YFRG), and 108–128 (KLLY…ASNT). N-linked (GlcNAc...) asparagine glycosylation occurs at Asn5. N-linked (GlcNAc...) asparagine glycosylation is present at Asn40. A glycan (N-linked (GlcNAc...) asparagine) is linked at Asn130. The LRR 7 repeat unit spans residues 133 to 147 (SLLELDLSYNQLQKI).

Belongs to the small leucine-rich proteoglycan (SLRP) family. SLRP class II subfamily. Binds to type I and type II collagen. Post-translationally, binds keratan sulfate chains. In terms of processing, sulfated on tyrosine residues. The N-terminus is blocked by a pyrrolidone carboxylic acid generated by post-translational modification of N-terminal glutamine.

The protein localises to the secreted. It localises to the extracellular space. Its subcellular location is the extracellular matrix. In terms of biological role, affects the rate of fibrils formation. May have a primary role in collagen fibrillogenesis. In Oryctolagus cuniculus (Rabbit), this protein is Fibromodulin (FMOD).